We begin with the raw amino-acid sequence, 352 residues long: Glycerol-3-phosphate dehydrogenase 1-like protein (352 aa).

An NAD(+)-binding site is contributed by 13 to 18; that stretch reads GSGNWG. Lys123 serves as a coordination point for substrate. Residue Ala156 participates in NAD(+) binding. The active-site Proton acceptor is Lys207. Arg272, Lys299, and Gln301 together coordinate NAD(+). Residue 272–273 coordinates substrate; it reads RN.

It belongs to the NAD-dependent glycerol-3-phosphate dehydrogenase family.

It is found in the cytoplasm. The catalysed reaction is sn-glycerol 3-phosphate + NAD(+) = dihydroxyacetone phosphate + NADH + H(+). Its function is as follows. Plays a role in regulating cardiac sodium current. In Xenopus tropicalis (Western clawed frog), this protein is Glycerol-3-phosphate dehydrogenase 1-like protein (gpd1l).